The primary structure comprises 122 residues: Ribonuclease P protein subunit p14 (122 aa).

The protein belongs to the eukaryotic/archaeal RNase P protein component 2 family. RNase P consists of a catalytic RNA moiety and about 10 protein subunits; POP1, POP4, POP5, POP7, RPP14, RPP21, RPP25, RPP30, RPP38 and RPP40. Within the RNase P complex, POP1, POP7 and RPP25 form the 'finger' subcomplex, POP5, RPP14, RPP40 and homodimeric RPP30 form the 'palm' subcomplex, and RPP21, POP4 and RPP38 form the 'wrist' subcomplex. All subunits of the RNase P complex interact with the catalytic RNA.

It localises to the nucleus. Its subcellular location is the nucleolus. Functionally, component of ribonuclease P, a ribonucleoprotein complex that generates mature tRNA molecules by cleaving their 5'-ends. The polypeptide is Ribonuclease P protein subunit p14 (Rpp14) (Mus musculus (Mouse)).